A 1922-amino-acid chain; its full sequence is Kinesin-related protein 4 (1922 aa).

Residues 22–343 (KIKVAIRVRP…LQFAKRAKRV (322 aa)) form the Kinesin motor domain. Residue 101-108 (GQTSSGKT) coordinates ATP. The interval 448 to 538 (QKIKKIKNSE…DDEFKDNLNL (91 aa)) is disordered. Residues 456–468 (SENNISSSSSNSS) are compositionally biased toward low complexity. Acidic residues-rich tracts occupy residues 469 to 480 (GEEDDDDKDDEN) and 488 to 532 (DKDD…DDEF). Residues 562 to 1712 (QVKVKREDLD…ELESTKQKNL (1151 aa)) are a coiled coil. The segment at 1887 to 1922 (TSTDNLTTTSTSLKSKSSSNGENKENQNNNIIIKNN) is disordered.

Belongs to the TRAFAC class myosin-kinesin ATPase superfamily. Kinesin family.

The protein resides in the cytoplasm. It is found in the cytoskeleton. Functionally, microtubule-associated force-producing protein that plays a role in organelle transport. Its motor activity is directed toward the microtubule's plus end. Cooperates with dynein in organizing spindle assembly during cell division. This Dictyostelium discoideum (Social amoeba) protein is Kinesin-related protein 4 (kif4).